The following is a 276-amino-acid chain: NH(3)-dependent NAD(+) synthetase (276 aa).

43-50 (GISGGVDS) serves as a coordination point for ATP. Mg(2+) is bound at residue Asp49. Arg146 provides a ligand contact to deamido-NAD(+). Thr166 serves as a coordination point for ATP. Glu171 contacts Mg(2+). 2 residues coordinate deamido-NAD(+): Lys179 and Asp186. Residues Lys195 and Thr217 each coordinate ATP. 266 to 267 (HK) serves as a coordination point for deamido-NAD(+).

The protein belongs to the NAD synthetase family. As to quaternary structure, homodimer.

The enzyme catalyses deamido-NAD(+) + NH4(+) + ATP = AMP + diphosphate + NAD(+) + H(+). It functions in the pathway cofactor biosynthesis; NAD(+) biosynthesis; NAD(+) from deamido-NAD(+) (ammonia route): step 1/1. Catalyzes the ATP-dependent amidation of deamido-NAD to form NAD. Uses ammonia as a nitrogen source. The sequence is that of NH(3)-dependent NAD(+) synthetase from Vibrio atlanticus (strain LGP32) (Vibrio splendidus (strain Mel32)).